The following is a 204-amino-acid chain: Crossover junction endodeoxyribonuclease RuvC (204 aa).

Catalysis depends on residues Asp-7, Glu-68, and Asp-141. 3 residues coordinate Mg(2+): Asp-7, Glu-68, and Asp-141. The interval 164–204 is disordered; that stretch reads QAVAAHRTSGASRTPGAAGTPGPSRTPGAPGTSRTLKGRTA.

It belongs to the RuvC family. In terms of assembly, homodimer which binds Holliday junction (HJ) DNA. The HJ becomes 2-fold symmetrical on binding to RuvC with unstacked arms; it has a different conformation from HJ DNA in complex with RuvA. In the full resolvosome a probable DNA-RuvA(4)-RuvB(12)-RuvC(2) complex forms which resolves the HJ. Mg(2+) serves as cofactor.

It localises to the cytoplasm. The catalysed reaction is Endonucleolytic cleavage at a junction such as a reciprocal single-stranded crossover between two homologous DNA duplexes (Holliday junction).. Its function is as follows. The RuvA-RuvB-RuvC complex processes Holliday junction (HJ) DNA during genetic recombination and DNA repair. Endonuclease that resolves HJ intermediates. Cleaves cruciform DNA by making single-stranded nicks across the HJ at symmetrical positions within the homologous arms, yielding a 5'-phosphate and a 3'-hydroxyl group; requires a central core of homology in the junction. The consensus cleavage sequence is 5'-(A/T)TT(C/G)-3'. Cleavage occurs on the 3'-side of the TT dinucleotide at the point of strand exchange. HJ branch migration catalyzed by RuvA-RuvB allows RuvC to scan DNA until it finds its consensus sequence, where it cleaves and resolves the cruciform DNA. This is Crossover junction endodeoxyribonuclease RuvC from Streptomyces griseus subsp. griseus (strain JCM 4626 / CBS 651.72 / NBRC 13350 / KCC S-0626 / ISP 5235).